Here is a 303-residue protein sequence, read N- to C-terminus: UDP-3-O-acyl-N-acetylglucosamine deacetylase (303 aa).

Residues His78, His237, and Asp241 each coordinate Zn(2+). Residue His264 is the Proton donor of the active site.

This sequence belongs to the LpxC family. Zn(2+) serves as cofactor.

The enzyme catalyses a UDP-3-O-[(3R)-3-hydroxyacyl]-N-acetyl-alpha-D-glucosamine + H2O = a UDP-3-O-[(3R)-3-hydroxyacyl]-alpha-D-glucosamine + acetate. Its pathway is glycolipid biosynthesis; lipid IV(A) biosynthesis; lipid IV(A) from (3R)-3-hydroxytetradecanoyl-[acyl-carrier-protein] and UDP-N-acetyl-alpha-D-glucosamine: step 2/6. Its function is as follows. Catalyzes the hydrolysis of UDP-3-O-myristoyl-N-acetylglucosamine to form UDP-3-O-myristoylglucosamine and acetate, the committed step in lipid A biosynthesis. The sequence is that of UDP-3-O-acyl-N-acetylglucosamine deacetylase from Xanthomonas euvesicatoria pv. vesicatoria (strain 85-10) (Xanthomonas campestris pv. vesicatoria).